A 90-amino-acid polypeptide reads, in one-letter code: Probable Fe(2+)-trafficking protein (90 aa).

Belongs to the Fe(2+)-trafficking protein family.

Functionally, could be a mediator in iron transactions between iron acquisition and iron-requiring processes, such as synthesis and/or repair of Fe-S clusters in biosynthetic enzymes. This chain is Probable Fe(2+)-trafficking protein, found in Marinobacter nauticus (strain ATCC 700491 / DSM 11845 / VT8) (Marinobacter aquaeolei).